We begin with the raw amino-acid sequence, 378 residues long: UDP-4-amino-4-deoxy-L-arabinose--oxoglutarate aminotransferase (378 aa).

An N6-(pyridoxal phosphate)lysine modification is found at lysine 182.

Belongs to the DegT/DnrJ/EryC1 family. ArnB subfamily. Homodimer. Pyridoxal 5'-phosphate serves as cofactor.

It carries out the reaction UDP-4-amino-4-deoxy-beta-L-arabinose + 2-oxoglutarate = UDP-beta-L-threo-pentopyranos-4-ulose + L-glutamate. It participates in nucleotide-sugar biosynthesis; UDP-4-deoxy-4-formamido-beta-L-arabinose biosynthesis; UDP-4-deoxy-4-formamido-beta-L-arabinose from UDP-alpha-D-glucuronate: step 2/3. Its pathway is bacterial outer membrane biogenesis; lipopolysaccharide biosynthesis. Its function is as follows. Catalyzes the conversion of UDP-4-keto-arabinose (UDP-Ara4O) to UDP-4-amino-4-deoxy-L-arabinose (UDP-L-Ara4N). The modified arabinose is attached to lipid A and is required for resistance to polymyxin and cationic antimicrobial peptides. This Aeromonas salmonicida (strain A449) protein is UDP-4-amino-4-deoxy-L-arabinose--oxoglutarate aminotransferase.